The chain runs to 338 residues: Glyceraldehyde-3-phosphate dehydrogenase, cytosolic (338 aa).

NAD(+) is bound by residues 14–15 (RI), aspartate 36, and arginine 83. D-glyceraldehyde 3-phosphate is bound by residues 154–156 (SCT), threonine 185, 214–215 (TG), and arginine 237. The active-site Nucleophile is cysteine 155. NAD(+) is bound at residue asparagine 319.

Belongs to the glyceraldehyde-3-phosphate dehydrogenase family. In terms of assembly, homotetramer.

The protein localises to the cytoplasm. It carries out the reaction D-glyceraldehyde 3-phosphate + phosphate + NAD(+) = (2R)-3-phospho-glyceroyl phosphate + NADH + H(+). It participates in carbohydrate degradation; glycolysis; pyruvate from D-glyceraldehyde 3-phosphate: step 1/5. Functionally, key enzyme in glycolysis that catalyzes the first step of the pathway by converting D-glyceraldehyde 3-phosphate (G3P) into 3-phospho-D-glyceroyl phosphate. Essential for the maintenance of cellular ATP levels and carbohydrate metabolism. In Pisum sativum (Garden pea), this protein is Glyceraldehyde-3-phosphate dehydrogenase, cytosolic (GAPC1).